Here is a 349-residue protein sequence, read N- to C-terminus: Cbb3-type cytochrome c oxidase subunit CcoP (349 aa).

Residues 1–67 (MADTDDEHAS…RVVRDRKGGR (67 aa)) are disordered. At 1–96 (MADTDDEHAS…NPLPRWWLWT (96 aa)) the chain is on the cytoplasmic side. Residues 16–30 (NRIELERQAADEAHK) are compositionally biased toward basic and acidic residues. Residues 97-117 (FYATIVWGVLYLIAYPAIPLV) traverse the membrane as a helical segment. Over 118 to 349 (NGATQGLLGQ…AYVHSLGGGE (232 aa)) the chain is Periplasmic. 2 Cytochrome c domains span residues 168 to 258 (YTAN…LELG) and 265 to 346 (ALAA…HSLG). Residues C181, C184, H185, M233, C278, C281, H282, and M323 each coordinate heme c.

It belongs to the CcoP / FixP family. As to quaternary structure, component of the cbb3-type cytochrome c oxidase at least composed of CcoN, CcoO, CcoQ and CcoP. Heme c is required as a cofactor.

It is found in the cell inner membrane. The protein operates within energy metabolism; oxidative phosphorylation. Functionally, C-type cytochrome. Part of the cbb3-type cytochrome c oxidase complex. CcoP subunit is required for transferring electrons from donor cytochrome c via its heme groups to CcoO subunit. From there, electrons are shuttled to the catalytic binuclear center of CcoN subunit where oxygen reduction takes place. The complex also functions as a proton pump. The protein is Cbb3-type cytochrome c oxidase subunit CcoP of Paracoccus denitrificans (strain Pd 1222).